The following is a 120-amino-acid chain: MAENRRIQKVNSLIREAIANVILKDVKHPKISNRWITVTRVCLSKDLHTARVYVSIMPHENTSAETLKALKASAGFIAYRASKGVFLKYFPEISFYLEDIFSPQDHIENLLWKIREQDKN.

This sequence belongs to the RbfA family. As to quaternary structure, monomer. Binds 30S ribosomal subunits, but not 50S ribosomal subunits or 70S ribosomes.

Its subcellular location is the cytoplasm. Functionally, one of several proteins that assist in the late maturation steps of the functional core of the 30S ribosomal subunit. Associates with free 30S ribosomal subunits (but not with 30S subunits that are part of 70S ribosomes or polysomes). Required for efficient processing of 16S rRNA. May interact with the 5'-terminal helix region of 16S rRNA. In Chlamydia felis (strain Fe/C-56) (Chlamydophila felis), this protein is Ribosome-binding factor A.